The sequence spans 236 residues: Ribose-5-phosphate isomerase A (236 aa).

Substrate contacts are provided by residues 28-31, 83-86, and 96-99; these read TGST, DGAD, and KGGG. The active-site Proton acceptor is Glu105. Residue Lys123 participates in substrate binding.

The protein belongs to the ribose 5-phosphate isomerase family. Homodimer.

It carries out the reaction aldehydo-D-ribose 5-phosphate = D-ribulose 5-phosphate. It participates in carbohydrate degradation; pentose phosphate pathway; D-ribose 5-phosphate from D-ribulose 5-phosphate (non-oxidative stage): step 1/1. Catalyzes the reversible conversion of ribose-5-phosphate to ribulose 5-phosphate. This chain is Ribose-5-phosphate isomerase A, found in Methylorubrum extorquens (strain CM4 / NCIMB 13688) (Methylobacterium extorquens).